We begin with the raw amino-acid sequence, 138 residues long: Large ribosomal subunit protein uL16 (138 aa).

Over residues 1–17 (MLIPRKVKHRKQHHPRQ) the composition is skewed to basic residues. Residues 1 to 24 (MLIPRKVKHRKQHHPRQRGIASGG) are disordered.

It belongs to the universal ribosomal protein uL16 family. As to quaternary structure, part of the 50S ribosomal subunit.

Its function is as follows. Binds 23S rRNA and is also seen to make contacts with the A and possibly P site tRNAs. In Mycobacterium ulcerans (strain Agy99), this protein is Large ribosomal subunit protein uL16.